The primary structure comprises 37 residues: Large ribosomal subunit protein bL36 (37 aa).

This sequence belongs to the bacterial ribosomal protein bL36 family.

The polypeptide is Large ribosomal subunit protein bL36 (Gloeobacter violaceus (strain ATCC 29082 / PCC 7421)).